A 210-amino-acid chain; its full sequence is Somatotropin (210 aa).

An N-terminal signal peptide occupies residues Met-1–Ala-22. Position 38 (His-38) interacts with Zn(2+). Cysteines 71 and 183 form a disulfide. Glu-192 contacts Zn(2+). Residues Cys-200 and Cys-208 are joined by a disulfide bond.

This sequence belongs to the somatotropin/prolactin family.

It is found in the secreted. Functionally, growth hormone plays an important role in growth control and is involved in the regulation of several anabolic processes. Implicated as an osmoregulatory substance important for seawater adaptation. This is Somatotropin (gh) from Misgurnus mizolepis (Chinese weatherloach).